We begin with the raw amino-acid sequence, 216 residues long: Regulator of G-protein signaling 19 (216 aa).

Residues M1–R19 are compositionally biased toward basic and acidic residues. The disordered stretch occupies residues M1–P30. Phosphoserine is present on residues S24 and S97. In terms of domain architecture, RGS spans S90–L206. The residue at position 151 (S151) is a Phosphoserine; by MAPK1 and MAPK3. Residues L207–A216 form an interaction with GIPC region.

In terms of assembly, interacts with GIPC PDZ domain. Interacts with GNAO1. Fatty acylated. Heavily palmitoylated in the cysteine string motif. In terms of processing, phosphorylated, mainly on serine residues.

It localises to the membrane. Functionally, inhibits signal transduction by increasing the GTPase activity of G protein alpha subunits thereby driving them into their inactive GDP-bound form. Binds to G-alpha subfamily 1 members, with the order G(i)a3 &gt; G(i)a1 &gt; G(o)a &gt;&gt; G(z)a/G(i)a2. Activity on G(z)-alpha is inhibited by phosphorylation and palmitoylation of the G-protein. The chain is Regulator of G-protein signaling 19 (Rgs19) from Mus musculus (Mouse).